A 344-amino-acid chain; its full sequence is Phenylalanine--tRNA ligase alpha subunit (344 aa).

Mg(2+) is bound at residue glutamate 256.

It belongs to the class-II aminoacyl-tRNA synthetase family. Phe-tRNA synthetase alpha subunit type 1 subfamily. Tetramer of two alpha and two beta subunits. Mg(2+) serves as cofactor.

Its subcellular location is the cytoplasm. The catalysed reaction is tRNA(Phe) + L-phenylalanine + ATP = L-phenylalanyl-tRNA(Phe) + AMP + diphosphate + H(+). This chain is Phenylalanine--tRNA ligase alpha subunit, found in Oceanobacillus iheyensis (strain DSM 14371 / CIP 107618 / JCM 11309 / KCTC 3954 / HTE831).